The chain runs to 643 residues: Extracellular metalloproteinase 4 (643 aa).

An N-terminal signal peptide occupies residues 1–18 (MHGLMLAGLLALPLSVLG). Residues 19–254 (HPTESHSSGI…VHSVVDYVSA (236 aa)) constitute a propeptide that is removed on maturation. The span at 47 to 57 (TKSDAVPKQDG) shows a compositional bias: basic and acidic residues. The interval 47–73 (TKSDAVPKQDGESFTTSSTGNDNSSSG) is disordered. A compositionally biased stretch (low complexity) spans 61–73 (TTSSTGNDNSSSG). N-linked (GlcNAc...) asparagine glycans are attached at residues Asn-271 and Asn-420. His-437 contributes to the Zn(2+) binding site. Residue Glu-438 is part of the active site. Position 441 (His-441) interacts with Zn(2+). 2 N-linked (GlcNAc...) asparagine glycosylation sites follow: Asn-603 and Asn-629.

The protein belongs to the peptidase M36 family. The cofactor is Zn(2+).

It is found in the secreted. Functionally, secreted metalloproteinase probably acting as a virulence factor. This is Extracellular metalloproteinase 4 (MEP4) from Trichophyton rubrum (Athlete's foot fungus).